A 201-amino-acid polypeptide reads, in one-letter code: MACGATLKRTLDFDPLLSPASPKRRRCAPLSAPASAAASPAAATAAAAASAAAASPQKYLRMEPSPFGDVSSRLTTEQILYNIKQEYKRMQKRRHLEASFQQADPGCTSDSQPHAFLISGPASPGTSSATSSPLKKEQPLFTLRQVGMICERLLKEREEKVREEYEEILNTKLAEQYDAFVKFTHDQIMRRYGEQPASYVS.

Serine 18 and serine 21 each carry phosphoserine. The short motif at lysine 23–alanine 28 is the Nuclear localization signal element. Phosphoserine is present on serine 55. The SYVS motif motif lies at serine 198–serine 201.

It belongs to the akirin family. Homodimer. Interacts with IPO9; the interaction is direct. Associates with 20S and 26S proteasomes. Interacts with SMARCD1; promoting SWI/SNF complex recruitment. Interacts with NFKBIZ. Interacts with YWHAB. Polyubiquitinated. Polyubiquitination is dependent of UBR5 that extends pre-ubiquitinated AKIRIN2.

The protein localises to the nucleus. The protein resides in the cytoplasm. It localises to the membrane. Functionally, molecular adapter that acts as a bridge between a variety of multiprotein complexes, and which is involved in embryonic development, immunity, myogenesis and brain development. Plays a key role in nuclear protein degradation by promoting import of proteasomes into the nucleus: directly binds to fully assembled 20S proteasomes at one end and to nuclear import receptor IPO9 at the other end, bridging them together and mediating the import of pre-assembled proteasome complexes through the nuclear pore. Involved in innate immunity by regulating the production of interleukin-6 (IL6) downstream of Toll-like receptor (TLR): acts by bridging the NF-kappa-B inhibitor NFKBIZ and the SWI/SNF complex, leading to promote induction of IL6. Also involved in adaptive immunity by promoting B-cell activation. Involved in brain development: required for the survival and proliferation of cerebral cortical progenitor cells. Involved in myogenesis: required for skeletal muscle formation and skeletal development, possibly by regulating expression of muscle differentiation factors. Also plays a role in facilitating interdigital tissue regression during limb development. The sequence is that of Akirin-2 from Mus musculus (Mouse).